A 210-amino-acid polypeptide reads, in one-letter code: Outer-membrane lipoprotein carrier protein (210 aa).

The signal sequence occupies residues 1–23; it reads MKKRIQKTILTVLFSSLSSIAFA.

The protein belongs to the LolA family. In terms of assembly, monomer.

Its subcellular location is the periplasm. Functionally, participates in the translocation of lipoproteins from the inner membrane to the outer membrane. Only forms a complex with a lipoprotein if the residue after the N-terminal Cys is not an aspartate (The Asp acts as a targeting signal to indicate that the lipoprotein should stay in the inner membrane). The chain is Outer-membrane lipoprotein carrier protein from Haemophilus ducreyi (strain 35000HP / ATCC 700724).